The primary structure comprises 304 residues: MAHYRNDYKKNDEVEFVRTGYGKDMIKVLHIQRDGKYHSIKEVATSVQLTLSSKKDYLHGDNSDVIPTDTIKNTVNVLAKFKGIKSIETFAVTICEHFLSSFKHVIRAQVYVEEVPWKRFEKNGVKHVHAFIYTPTGTHFCEVEQIRNGPPVIHSGIKDLKVLKTTQSGFEGFIKDQFTTLPEVKDRCFATQVYCKWRYHQGRDVDFEATWDTVRSIVLQKFAGPYDKGEYSPSVQKTLYDIQVLTLGQVPEIEDMEISLPNIHYLNIDMSKMGLINKEEVLLPLDNPYGRITGTVKRKLTSRL.

Ala2 carries the post-translational modification N-acetylalanine. N6-acetyllysine; alternate occurs at positions 10 and 23. Residues Lys10 and Lys23 each carry the N6-succinyllysine; alternate modification. Catalysis depends on Lys23, which acts as the Charge relay system. N6-acetyllysine is present on residues Lys27 and Lys36. Residues Ser39 and Ser63 each carry the phosphoserine modification. Thr68 (charge relay system) is an active-site residue. Positions 68 and 69 each coordinate urate. 3 positions are modified to N6-acetyllysine: Lys118, Lys122, and Lys164. Phe170 contacts urate. Residues Lys175 and Lys185 each carry the N6-acetyllysine modification. A urate-binding site is contributed by Arg187. N6-acetyllysine; alternate is present on residues Lys221 and Lys228. An N6-succinyllysine; alternate mark is found at Lys221 and Lys228. Ser232 carries the phosphoserine modification. 3 residues coordinate urate: Val235, Gln236, and Asn262. His264 acts as the Charge relay system in catalysis. N6-acetyllysine is present on Lys278. Tyr289 is modified (phosphotyrosine). The Microbody targeting signal motif lies at 302–304 (SRL).

It belongs to the uricase family. As to quaternary structure, homotetramer.

The protein resides in the peroxisome. It catalyses the reaction urate + O2 + H2O = 5-hydroxyisourate + H2O2. It functions in the pathway purine metabolism; urate degradation; (S)-allantoin from urate: step 1/3. In terms of biological role, catalyzes the oxidation of uric acid to 5-hydroxyisourate, which is further processed to form (S)-allantoin. This is Uricase (UOX) from Sus scrofa (Pig).